Consider the following 92-residue polypeptide: N(2)-fixation sustaining protein CowN (92 aa).

Belongs to the CowN family.

Its function is as follows. Is required to sustain N(2)-dependent growth in the presence of low levels of carbon monoxide (CO). Probably acts by protecting the N(2) fixation ability of the nitrogenase complex, which is inactivated in the presence of CO. The sequence is that of N(2)-fixation sustaining protein CowN from Cereibacter sphaeroides (strain KD131 / KCTC 12085) (Rhodobacter sphaeroides).